The primary structure comprises 226 residues: Transmembrane protein 98 (226 aa).

Topologically, residues 1–3 (MET) are cytoplasmic. The tract at residues 1 to 88 (METVVIVAIG…ENEDWIEDAS (88 aa)) is required for interaction with MYRF. A helical membrane pass occupies residues 4–24 (VVIVAIGVLATIFLASFAALV). At 25–226 (LVCRQRYCRP…EGFLQEQSAI (202 aa)) the chain is on the extracellular side. The segment at 207–226 (SEPDKGLPGPEGFLQEQSAI) is disordered.

It belongs to the TMEM98 family. In terms of assembly, interacts (via N-terminal region) with MYRF; the interaction inhibits MYRF self-cleavage. In terms of tissue distribution, widely expressed with high expression in the ovary, pancreas and prostate. Expressed in the eye, particularly in corneal endothelium, iris, ciliary body, sclera, optic nerve, optic nerve head, and retina. Expressed by activated peripheral blood mononuclear cells.

It is found in the cell membrane. The protein localises to the secreted. It localises to the extracellular exosome. The protein resides in the endoplasmic reticulum membrane. In terms of biological role, functions as a negative regulator of MYRF in oligodendrocyte differentiation and myelination. Interacts with the C-terminal of MYRF inhibiting MYRF self-cleavage and N-fragment nuclear translocation. The secreted form promotes differentiation of T helper 1 cells (Th1). This is Transmembrane protein 98 (TMEM98) from Homo sapiens (Human).